Consider the following 566-residue polypeptide: Putative ankyrin repeat protein RF_0987 (566 aa).

3 disordered regions span residues 61–118 (KKKN…HENS), 276–314 (PPVM…SAEI), and 355–392 (VNNN…SEST). Positions 78–92 (NQEEPKLASQEHTEA) are enriched in basic and acidic residues. Over residues 101–112 (TGNTALPSVTAS) the composition is skewed to polar residues. The segment covering 296–308 (TPVTTPSKVVPTT) has biased composition (low complexity). Residues 365–378 (EKSPPVSSSNVTIQ) are compositionally biased toward polar residues. ANK repeat units lie at residues 506–535 (SGET…KIST) and 539–566 (ECQY…KGYQ).

The polypeptide is Putative ankyrin repeat protein RF_0987 (Rickettsia felis (strain ATCC VR-1525 / URRWXCal2) (Rickettsia azadi)).